The sequence spans 490 residues: Endoglucanase 13 (490 aa).

Positions 1–26 (MSQLKNGSSQCLWTSICIVLIVMSMA) are cleaved as a signal peptide. Asn-6 carries N-linked (GlcNAc...) asparagine glycosylation. Asp-86 functions as the Nucleophile in the catalytic mechanism. Catalysis depends on residues His-412, Asp-464, and Glu-473.

It belongs to the glycosyl hydrolase 9 (cellulase E) family.

It is found in the secreted. The enzyme catalyses Endohydrolysis of (1-&gt;4)-beta-D-glucosidic linkages in cellulose, lichenin and cereal beta-D-glucans.. The chain is Endoglucanase 13 from Arabidopsis thaliana (Mouse-ear cress).